A 364-amino-acid polypeptide reads, in one-letter code: DNA replication and repair protein RecF (364 aa).

ATP is bound at residue 30 to 37 (GNNGQGKT).

It belongs to the RecF family.

Its subcellular location is the cytoplasm. The RecF protein is involved in DNA metabolism; it is required for DNA replication and normal SOS inducibility. RecF binds preferentially to single-stranded, linear DNA. It also seems to bind ATP. This is DNA replication and repair protein RecF from Citrifermentans bemidjiense (strain ATCC BAA-1014 / DSM 16622 / JCM 12645 / Bem) (Geobacter bemidjiensis).